The sequence spans 442 residues: Histidinol dehydrogenase (442 aa).

Residues tyrosine 142, glutamine 204, and asparagine 227 each coordinate NAD(+). Residues serine 250, glutamine 272, and histidine 275 each coordinate substrate. Residues glutamine 272 and histidine 275 each contribute to the Zn(2+) site. Active-site proton acceptor residues include glutamate 340 and histidine 341. Histidine 341, aspartate 374, glutamate 428, and histidine 433 together coordinate substrate. A Zn(2+)-binding site is contributed by aspartate 374. Residue histidine 433 participates in Zn(2+) binding.

Belongs to the histidinol dehydrogenase family. It depends on Zn(2+) as a cofactor.

The enzyme catalyses L-histidinol + 2 NAD(+) + H2O = L-histidine + 2 NADH + 3 H(+). The protein operates within amino-acid biosynthesis; L-histidine biosynthesis; L-histidine from 5-phospho-alpha-D-ribose 1-diphosphate: step 9/9. Functionally, catalyzes the sequential NAD-dependent oxidations of L-histidinol to L-histidinaldehyde and then to L-histidine. The protein is Histidinol dehydrogenase of Prochlorococcus marinus (strain MIT 9313).